Consider the following 296-residue polypeptide: Developmental pluripotency-associated protein 4 (296 aa).

Positions 1–13 (METAGDKKWSAEE) are enriched in basic and acidic residues. The interval 1 to 73 (METAGDKKWS…QTRRKVPIPP (73 aa)) is disordered. The span at 23–34 (SSQPSTAPAKAK) shows a compositional bias: low complexity. The segment covering 42-58 (KSETDNGCKPKEGKPQD) has biased composition (basic and acidic residues).

As to quaternary structure, interacts with DPPA2. Interacts with PCGF1. Expressed in pluripotent embryonic cells, but not in differentiated somatic tissues.

Its subcellular location is the nucleus. May be involved in the maintenance of active epigenetic status of target genes. May inhibit differentiation of embryonic stem (ES) cells into a primitive ectoderm lineage. The sequence is that of Developmental pluripotency-associated protein 4 (Dppa4) from Mus musculus (Mouse).